The following is a 311-amino-acid chain: Lipoyl synthase (311 aa).

The [4Fe-4S] cluster site is built by cysteine 58, cysteine 63, cysteine 69, cysteine 84, cysteine 88, cysteine 91, and serine 298. The 218-residue stretch at 70-287 (FGHGTATFMI…EQEALAMGFR (218 aa)) folds into the Radical SAM core domain.

This sequence belongs to the radical SAM superfamily. Lipoyl synthase family. The cofactor is [4Fe-4S] cluster.

It is found in the cytoplasm. The catalysed reaction is [[Fe-S] cluster scaffold protein carrying a second [4Fe-4S](2+) cluster] + N(6)-octanoyl-L-lysyl-[protein] + 2 oxidized [2Fe-2S]-[ferredoxin] + 2 S-adenosyl-L-methionine + 4 H(+) = [[Fe-S] cluster scaffold protein] + N(6)-[(R)-dihydrolipoyl]-L-lysyl-[protein] + 4 Fe(3+) + 2 hydrogen sulfide + 2 5'-deoxyadenosine + 2 L-methionine + 2 reduced [2Fe-2S]-[ferredoxin]. The protein operates within protein modification; protein lipoylation via endogenous pathway; protein N(6)-(lipoyl)lysine from octanoyl-[acyl-carrier-protein]: step 2/2. Its function is as follows. Catalyzes the radical-mediated insertion of two sulfur atoms into the C-6 and C-8 positions of the octanoyl moiety bound to the lipoyl domains of lipoate-dependent enzymes, thereby converting the octanoylated domains into lipoylated derivatives. The polypeptide is Lipoyl synthase (Thiobacillus denitrificans (strain ATCC 25259 / T1)).